A 565-amino-acid chain; its full sequence is Sensor histidine kinase MtrB (565 aa).

Residues 1-13 (MMWGSRRRTRSRW) are compositionally biased toward basic residues. The tract at residues 1-21 (MMWGSRRRTRSRWGRSGPMTR) is disordered. The next 2 helical transmembrane spans lie at 42–62 (VVALTLGLSLAVILALGFVLT) and 213–233 (GTMITGGAVLLVLLAGIALLV). The 53-residue stretch at 235–287 (RQVVVPVRSASRIAERFAEGHLSERMPVRGEDDMARLAMSFNDMAESLSRQIT) folds into the HAMP domain. The Histidine kinase domain occupies 302–519 (DVSHELRTPL…CFRLTLPLVR (218 aa)). Phosphohistidine; by autocatalysis is present on His305. The disordered stretch occupies residues 524–565 (TTSPLPMKPIPQPSPSGGQSPSTGPQHAKDRARQREHAERSL). Over residues 538 to 549 (PSGGQSPSTGPQ) the composition is skewed to low complexity. The span at 550–565 (HAKDRARQREHAERSL) shows a compositional bias: basic and acidic residues.

It is found in the cell membrane. The enzyme catalyses ATP + protein L-histidine = ADP + protein N-phospho-L-histidine.. Functionally, member of the two-component regulatory system MtrA/MtrB. Seems to function as a membrane-associated protein kinase that phosphorylates MtrA in response to environmental signals. The polypeptide is Sensor histidine kinase MtrB (mtrB) (Mycolicibacterium paratuberculosis (strain ATCC BAA-968 / K-10) (Mycobacterium paratuberculosis)).